The sequence spans 96 residues: Co-chaperonin GroES (96 aa).

It belongs to the GroES chaperonin family. Heptamer of 7 subunits arranged in a ring. Interacts with the chaperonin GroEL.

It localises to the cytoplasm. In terms of biological role, together with the chaperonin GroEL, plays an essential role in assisting protein folding. The GroEL-GroES system forms a nano-cage that allows encapsulation of the non-native substrate proteins and provides a physical environment optimized to promote and accelerate protein folding. GroES binds to the apical surface of the GroEL ring, thereby capping the opening of the GroEL channel. In Delftia acidovorans (strain DSM 14801 / SPH-1), this protein is Co-chaperonin GroES.